Consider the following 479-residue polypeptide: Glutamyl-tRNA(Gln) amidotransferase subunit A (479 aa).

Residues Lys-75 and Ser-150 each act as charge relay system in the active site. The active-site Acyl-ester intermediate is Ser-174.

It belongs to the amidase family. GatA subfamily. In terms of assembly, heterotrimer of A, B and C subunits.

It catalyses the reaction L-glutamyl-tRNA(Gln) + L-glutamine + ATP + H2O = L-glutaminyl-tRNA(Gln) + L-glutamate + ADP + phosphate + H(+). Functionally, allows the formation of correctly charged Gln-tRNA(Gln) through the transamidation of misacylated Glu-tRNA(Gln) in organisms which lack glutaminyl-tRNA synthetase. The reaction takes place in the presence of glutamine and ATP through an activated gamma-phospho-Glu-tRNA(Gln). In Synechococcus elongatus (strain ATCC 33912 / PCC 7942 / FACHB-805) (Anacystis nidulans R2), this protein is Glutamyl-tRNA(Gln) amidotransferase subunit A.